Consider the following 144-residue polypeptide: MQTQRASLSLGRWSLWLLLLGLVVPSASAQALSYREAVLRAVDQLNELSSEANLYRLLELDPPPKDNEDLGTRKPVSFTVKETVCPRTIQQPAEQCDFKEKGRVKQCVGTVTLDPSNDQFDLNCNELQSVILPWKWPWWPWRRG.

The signal sequence occupies residues 1-29; the sequence is MQTQRASLSLGRWSLWLLLLGLVVPSASA. Residues 30–130 constitute a propeptide that is removed on maturation; it reads QALSYREAVL…DLNCNELQSV (101 aa). Intrachain disulfides connect Cys-85/Cys-96 and Cys-107/Cys-124. An Arginine amide modification is found at Arg-143.

This sequence belongs to the cathelicidin family. In terms of processing, elastase might be responsible for its maturation. Large granules of neutrophils.

Its subcellular location is the secreted. In terms of biological role, potent microbicidal activity; active against S.aureus and E.coli. This chain is Cathelicidin-4 (CATHL4), found in Bos taurus (Bovine).